Here is a 307-residue protein sequence, read N- to C-terminus: 3-ketodihydrosphingosine reductase TSC10 (307 aa).

NADP(+) is bound at residue Leu11. NADPH-binding residues include Gly14, Ser16, and Gly18. A GXSXG motif is present at residues 14–18 (GGSQG). Leu19 is a binding site for NADP(+). NADPH-binding residues include Arg40, Lys44, and Leu74. The Proton donor role is filled by Ser147. Positions 161, 165, and 194 each coordinate NADP(+). The Proton acceptor role is filled by Tyr161. Lys165 acts as the Lowers pKa of active site Tyr in catalysis. The helical transmembrane segment at 261–281 (YFLWPLGWLLGALVNLLVVPI) threads the bilayer.

Belongs to the short-chain dehydrogenases/reductases (SDR) family.

The protein localises to the endoplasmic reticulum membrane. It catalyses the reaction sphinganine + NADP(+) = 3-oxosphinganine + NADPH + H(+). It participates in lipid metabolism; sphingolipid metabolism. In terms of biological role, catalyzes the reduction of 3'-oxosphinganine (3-ketodihydrosphingosine/KDS) to sphinganine (dihydrosphingosine/DHS), the second step of de novo sphingolipid biosynthesis. The sequence is that of 3-ketodihydrosphingosine reductase TSC10 (TSC10) from Eremothecium gossypii (strain ATCC 10895 / CBS 109.51 / FGSC 9923 / NRRL Y-1056) (Yeast).